The chain runs to 761 residues: NADP-dependent malic enzyme (761 aa).

Positions 1 to 437 are malic enzyme; the sequence is MPGIDKTDRA…QLSARRDPIA (437 aa). Tyrosine 49 serves as the catalytic Proton donor. The Proton acceptor role is filled by lysine 104. Glutamate 146, aspartate 147, and aspartate 172 together coordinate a divalent metal cation. Residues 205–208, asparagine 297, and asparagine 329 each bind NADP(+); that span reads AGAA. Residues 438–761 form a phosphate acetyltransferase region; the sequence is STLQRIVERV…AAIAAYNAGT (324 aa).

This sequence in the N-terminal section; belongs to the malic enzymes family. The protein in the C-terminal section; belongs to the phosphate acetyltransferase and butyryltransferase family. As to quaternary structure, homooctamer. Requires Mg(2+) as cofactor. Mn(2+) serves as cofactor.

The catalysed reaction is (S)-malate + NADP(+) = pyruvate + CO2 + NADPH. It carries out the reaction oxaloacetate + H(+) = pyruvate + CO2. This chain is NADP-dependent malic enzyme (tme), found in Rhizobium meliloti (strain 1021) (Ensifer meliloti).